We begin with the raw amino-acid sequence, 755 residues long: Polyribonucleotide nucleotidyltransferase (755 aa).

The Mg(2+) site is built by Asp493 and Asp499. The 60-residue stretch at 560–619 (PRIMTIQIPVDKIGALIGPGGKTIRNICDTTGAQIDIEDDGRVFITAPDGEAAKKAISMI) folds into the KH domain. Residues 629-698 (GDIFLGKVVS…NTGKISLSRR (70 aa)) enclose the S1 motif domain. Residues 704–755 (ETPEARKAAGAAPRPRPREEQRGGREEPRSLREELRGPRRDGERPRPRRRDD) are disordered. Basic and acidic residues predominate over residues 719–755 (RPREEQRGGREEPRSLREELRGPRRDGERPRPRRRDD).

It belongs to the polyribonucleotide nucleotidyltransferase family. The cofactor is Mg(2+).

It localises to the cytoplasm. The enzyme catalyses RNA(n+1) + phosphate = RNA(n) + a ribonucleoside 5'-diphosphate. Involved in mRNA degradation. Catalyzes the phosphorolysis of single-stranded polyribonucleotides processively in the 3'- to 5'-direction. The chain is Polyribonucleotide nucleotidyltransferase from Chloroflexus aggregans (strain MD-66 / DSM 9485).